A 115-amino-acid chain; its full sequence is NAD(P)H-quinone oxidoreductase subunit M (115 aa).

This sequence belongs to the complex I NdhM subunit family. In terms of assembly, NDH-1 can be composed of about 15 different subunits; different subcomplexes with different compositions have been identified which probably have different functions.

It is found in the cellular thylakoid membrane. It carries out the reaction a plastoquinone + NADH + (n+1) H(+)(in) = a plastoquinol + NAD(+) + n H(+)(out). It catalyses the reaction a plastoquinone + NADPH + (n+1) H(+)(in) = a plastoquinol + NADP(+) + n H(+)(out). In terms of biological role, NDH-1 shuttles electrons from an unknown electron donor, via FMN and iron-sulfur (Fe-S) centers, to quinones in the respiratory and/or the photosynthetic chain. The immediate electron acceptor for the enzyme in this species is believed to be plastoquinone. Couples the redox reaction to proton translocation, and thus conserves the redox energy in a proton gradient. Cyanobacterial NDH-1 also plays a role in inorganic carbon-concentration. The polypeptide is NAD(P)H-quinone oxidoreductase subunit M (Prochlorococcus marinus (strain MIT 9303)).